Reading from the N-terminus, the 713-residue chain is Subtilisin-like protease SBT4.9 (713 aa).

The first 24 residues, 1–24 (MARRADSFCLISCVLVSFVISVSA), serve as a signal peptide directing secretion. Residues 25–113 (VTDDSQDKQV…VFPDINYKLQ (89 aa)) constitute a propeptide, activation peptide. The region spanning 34–112 (VYVVYMGSLP…SVFPDINYKL (79 aa)) is the Inhibitor I9 domain. The 444-residue stretch at 117–560 (SWDFLGLKEG…AGHVDPIAAI (444 aa)) folds into the Peptidase S8 domain. Catalysis depends on Asp145, which acts as the Charge relay system. Asn176 carries N-linked (GlcNAc...) asparagine glycosylation. The Charge relay system role is filled by His200. N-linked (GlcNAc...) asparagine glycans are attached at residues Asn215 and Asn223. Residues 356–415 (NYPLYGGSTDGPLLRGKILVSEDKVSSEIVVANINENYHDYAYVSILPSSALSKDDFDSV) enclose the PA domain. Asn420 carries N-linked (GlcNAc...) asparagine glycosylation. Ser499 (charge relay system) is an active-site residue. N-linked (GlcNAc...) asparagine glycans are attached at residues Asn536, Asn583, Asn627, and Asn637.

It belongs to the peptidase S8 family. In terms of processing, the C-terminal propeptide is autocleaved.

It localises to the secreted. The polypeptide is Subtilisin-like protease SBT4.9 (Arabidopsis thaliana (Mouse-ear cress)).